A 505-amino-acid chain; its full sequence is Glycerol kinase (505 aa).

Position 12 (Thr-12) interacts with ADP. Positions 12, 13, and 14 each coordinate ATP. Residue Thr-12 coordinates sn-glycerol 3-phosphate. Arg-16 is an ADP binding site. 4 residues coordinate sn-glycerol 3-phosphate: Arg-82, Glu-83, Tyr-134, and Asp-249. Glycerol-binding residues include Arg-82, Glu-83, Tyr-134, Asp-249, and Gln-250. 2 residues coordinate ADP: Thr-271 and Gly-315. Residues Thr-271, Gly-315, Gln-319, and Gly-416 each coordinate ATP. Gly-416 and Asn-420 together coordinate ADP.

Belongs to the FGGY kinase family.

It carries out the reaction glycerol + ATP = sn-glycerol 3-phosphate + ADP + H(+). Its pathway is polyol metabolism; glycerol degradation via glycerol kinase pathway; sn-glycerol 3-phosphate from glycerol: step 1/1. Its activity is regulated as follows. Inhibited by fructose 1,6-bisphosphate (FBP). In terms of biological role, key enzyme in the regulation of glycerol uptake and metabolism. Catalyzes the phosphorylation of glycerol to yield sn-glycerol 3-phosphate. This is Glycerol kinase from Mycolicibacterium gilvum (strain PYR-GCK) (Mycobacterium gilvum (strain PYR-GCK)).